Consider the following 78-residue polypeptide: Acyl carrier protein (78 aa).

A Carrier domain is found at 2–77 (DNIVERVKKI…QAVDYILAGK (76 aa)). Ser-37 is subject to O-(pantetheine 4'-phosphoryl)serine.

The protein belongs to the acyl carrier protein (ACP) family. Post-translationally, 4'-phosphopantetheine is transferred from CoA to a specific serine of apo-ACP by AcpS. This modification is essential for activity because fatty acids are bound in thioester linkage to the sulfhydryl of the prosthetic group.

It localises to the cytoplasm. It participates in lipid metabolism; fatty acid biosynthesis. Its function is as follows. Carrier of the growing fatty acid chain in fatty acid biosynthesis. The protein is Acyl carrier protein of Dechloromonas aromatica (strain RCB).